The following is a 467-amino-acid chain: Argininosuccinate lyase (467 aa).

The protein belongs to the lyase 1 family. Argininosuccinate lyase subfamily.

The protein resides in the cytoplasm. It catalyses the reaction 2-(N(omega)-L-arginino)succinate = fumarate + L-arginine. It participates in amino-acid biosynthesis; L-arginine biosynthesis; L-arginine from L-ornithine and carbamoyl phosphate: step 3/3. The sequence is that of Argininosuccinate lyase from Methylibium petroleiphilum (strain ATCC BAA-1232 / LMG 22953 / PM1).